Reading from the N-terminus, the 749-residue chain is Catalase-peroxidase 2 (749 aa).

Positions 1–27 (MFKRTIPLFAAFTLAISPSIFPNYAHA) are cleaved as a signal peptide. A cross-link (tryptophyl-tyrosyl-methioninium (Trp-Tyr) (with M-255)) is located at residues 107 to 229 (WHAAGTYRIY…LAATVMGLIY (123 aa)). The active-site Proton acceptor is the histidine 108. The tryptophyl-tyrosyl-methioninium (Tyr-Met) (with W-107) cross-link spans 229 to 255 (YVNPEGPNGVPDPLAAAEKIRETFGRM). Residue histidine 270 participates in heme b binding.

This sequence belongs to the peroxidase family. Peroxidase/catalase subfamily. In terms of assembly, homodimer or homotetramer. The cofactor is heme b. Formation of the three residue Trp-Tyr-Met cross-link is important for the catalase, but not the peroxidase activity of the enzyme.

It catalyses the reaction H2O2 + AH2 = A + 2 H2O. The enzyme catalyses 2 H2O2 = O2 + 2 H2O. Bifunctional enzyme with both catalase and broad-spectrum peroxidase activity. This Legionella pneumophila (strain Lens) protein is Catalase-peroxidase 2.